A 287-amino-acid chain; its full sequence is SPX domain-containing protein 2 (287 aa).

The SPX domain maps to 1–162 (MKFGKSLSNQ…GALIRLPFIQ (162 aa)). Positions 36-50 (EPRSVENRPNKRSRS) are enriched in basic and acidic residues. 2 disordered regions span residues 36-61 (EPRSVENRPNKRSRSDSNSVDTDPTV) and 194-213 (KSRNLDEEGEPTTSGMVKTG).

It localises to the nucleus. May inhibit PHR1 DNA-binding activity in a Pi-dependent manner. The sequence is that of SPX domain-containing protein 2 from Arabidopsis thaliana (Mouse-ear cress).